Here is a 441-residue protein sequence, read N- to C-terminus: C-terminal-binding protein 1 (441 aa).

Positions 1–70 (MGSSHLLNKG…EIHEKVLNEA (70 aa)) are interaction with GLIS2 1. Residues S100, 180-185 (IGLGRV), D204, 237-243 (CGLNEHN), 264-266 (TAR), and D290 contribute to the NAD(+) site. R266 is a catalytic residue. Residues 288–360 (ALDVHESEPF…VNKDHLTAAT (73 aa)) are interaction with GLIS2 2. The active site involves E295. S300 is modified (phosphoserine). The Proton donor role is filled by H315. 315-318 (HAAW) is an NAD(+) binding site. The interval 409–441 (SHGLPPVAHPPHAPSPGQTVKPEADRDHTSDQL) is disordered. S423 bears the Phosphoserine mark. Residue K429 forms a Glycyl lysine isopeptide (Lys-Gly) (interchain with G-Cter in SUMO) linkage. Basic and acidic residues predominate over residues 430 to 441 (PEADRDHTSDQL).

Belongs to the D-isomer specific 2-hydroxyacid dehydrogenase family. In terms of assembly, homo- or heterodimer. Heterodimer with CTBP2. Interacts with ELK3 (via its PXDLS motif). Interacts with RBBP8 (via its PXDLS motif). Interacts with PNN, MECOM and ZFHX1B. Interacts with ZNF366 (via PXDLS motif). Interaction with SATB1 (non-acetylated form); the interaction stabilizes its attachment to DNA and promotes transcription repression. Interacts with PRDM16; the interaction represses white adipose tissue (WAT)-specific genes expression. Interacts with GLIS2, HIPK2, FOXP1, FOXP2, HDAC4, HDAC5, HDAC9, NRIP1, WIZ and ZNF217. Interacts with BCL6; the interaction is required for BCL6 transcriptional autoinhibition and inhibition of some BCL6 target genes. Interacts with IKZF4. Interacts with MCRIP1 (unphosphorylated form, via the PXDLS motif); competitively inhibiting CTBP-ZEB1 interaction. Interacts with Bassoon/BSN; this interaction targets and anchors CTBP1 to presynapses. Interacts with SIMC1. Requires NAD(+) as cofactor. Post-translationally, ADP-ribosylated; when cells are exposed to brefeldin A. The level of phosphorylation appears to be regulated during the cell cycle. Phosphorylation by HIPK2 on Ser-423 induces proteasomal degradation. In terms of processing, sumoylation on Lys-429 is promoted by the E3 SUMO-protein ligase CBX4. As to expression, expressed in a wide range of adult tissues.

The protein localises to the cytoplasm. It localises to the nucleus. Functionally, corepressor targeting diverse transcription regulators such as GLIS2 or BCL6. Has dehydrogenase activity. Involved in controlling the equilibrium between tubular and stacked structures in the Golgi complex. Functions in brown adipose tissue (BAT) differentiation. The polypeptide is C-terminal-binding protein 1 (Ctbp1) (Mus musculus (Mouse)).